The primary structure comprises 217 residues: Cysteine-rich protein 3 (217 aa).

Positions 3 to 64 (WTCPRCQQPV…KPCYGALFGP (62 aa)) constitute an LIM zinc-binding 1 domain. The segment at 84-112 (PGCTTPLSPSSFSPPRPRTGLPQGKKSPP) is disordered. One can recognise an LIM zinc-binding 2 domain in the interval 122 to 183 (SLCPGCGEPV…VPCYGYLFGP (62 aa)).

As to expression, expressed in most tissues, but not in skeletal muscle.

Its subcellular location is the cytoplasm. The polypeptide is Cysteine-rich protein 3 (CRIP3) (Homo sapiens (Human)).